Consider the following 704-residue polypeptide: Polyribonucleotide nucleotidyltransferase (704 aa).

Residues Asp487 and Asp493 each contribute to the Mg(2+) site. The region spanning 554–613 (PRLLTIKIHPDKIREVIGKGGSTIQAITKETGTQIDIQDDGTIIIASVNAIAAQAAKSRI) is the KH domain. Residues 623–691 (GRIYEGKVAK…KQGRIRLSIK (69 aa)) form the S1 motif domain.

The protein belongs to the polyribonucleotide nucleotidyltransferase family. As to quaternary structure, component of the RNA degradosome, which is a multiprotein complex involved in RNA processing and mRNA degradation. Requires Mg(2+) as cofactor.

It is found in the cytoplasm. The enzyme catalyses RNA(n+1) + phosphate = RNA(n) + a ribonucleoside 5'-diphosphate. Involved in mRNA degradation. Catalyzes the phosphorolysis of single-stranded polyribonucleotides processively in the 3'- to 5'-direction. This Xanthomonas campestris pv. campestris (strain 8004) protein is Polyribonucleotide nucleotidyltransferase.